Consider the following 79-residue polypeptide: Hematopoietic cell signal transducer (79 aa).

The N-terminal stretch at 1–17 is a signal peptide; sequence MDPPGYLLFLLLLPVAA. Over 18–35 the chain is Extracellular; sequence SQTSAGSCSGCGTLSLPL. The helical transmembrane segment at 36–56 threads the bilayer; that stretch reads LAGLVAADAVMSLLIVGVVFV. Residues 57 to 79 are Cytoplasmic-facing; it reads CMRPHGRPAQEDGRVYINMPGRG. Y72 is modified (phosphotyrosine). The GRB2 binding site stretch occupies residues 72 to 74; that stretch reads YIN. A PIK3R1 binding site region spans residues 72 to 75; sequence YINM.

It belongs to the DAP10 family. In terms of assembly, homodimer; Disulfide-linked. Interacts with KLRK1 to form a stable complex, which results in surface expression of both proteins, whereas alone, it is minimally expressed. Interacts with PIK3R1 and GRB2. Interacts with CLEC5A. Forms an CLEC5A/TYROBP/HCST trimolecular complex depending almost solely on TYROBP. Heterohexamer composed of four subunits of HCST/DAP10 and two subunits of KLRK1. Interacts (via transmembrane domain) with KLRK1 isoform 1 (via transmembrane domain); the interaction is required for KLRK1 cell surface expression on naive NK cells and activated CD8(+) T-cells, but is dispensable on activated TYROBP-expressing NK cells. Interacts (via transmembrane domain) with KLRK1 isoform 2 (via transmembrane domain); the interaction is required for KLRK1 NK cell surface expression and induces NK cell-mediated cytotoxicity. Interacts with CD300H. Phosphorylated; PIK3R1 and GRB2 associate specifically with tyrosine-phosphorylated HCST. Post-translationally, O-glycosylated.

The protein resides in the membrane. Transmembrane adapter protein which associates with KLRK1 to form an activation receptor KLRK1-HCST in lymphoid and myeloid cells; this receptor plays a major role in triggering cytotoxicity against target cells expressing cell surface ligands such as MHC class I chain-related MICA and MICB, and UL16-binding proteins (ULBPs); these ligands are up-regulated by stress conditions and pathological state such as viral infection and tumor transformation. Functions as a docking site for PI3-kinase PIK3R1 and GRB2. Interaction of ULBPs with KLRK1-HCST triggers calcium mobilization and activation of the PIK3R1, MAP2K/ERK, and JAK2/STAT5 signaling pathways. Both PIK3R1 and GRB2 are required for full KLRK1-HCST-mediated activation and ultimate killing of target cells. In NK cells, KLRK1-HCST signaling directly induces cytotoxicity and enhances cytokine production initiated via DAP12/TYROBP-associated receptors. In T-cells, it provides primarily costimulation for TCR-induced signals. KLRK1-HCST receptor plays a role in immune surveillance against tumors and is required for cytolysis of tumors cells; indeed, melanoma cells that do not express KLRK1 ligands escape from immune surveillance mediated by NK cells. The sequence is that of Hematopoietic cell signal transducer (Hcst) from Mus musculus (Mouse).